A 101-amino-acid chain; its full sequence is Small ribosomal subunit protein bS18c (101 aa).

The span at 1–19 (MDKSKRLFRKSKRSFRRRL) shows a compositional bias: basic residues. The disordered stretch occupies residues 1 to 23 (MDKSKRLFRKSKRSFRRRLPPIG).

This sequence belongs to the bacterial ribosomal protein bS18 family. Part of the 30S ribosomal subunit.

The protein localises to the plastid. The protein resides in the chloroplast. The protein is Small ribosomal subunit protein bS18c of Liriodendron tulipifera (Tuliptree).